Consider the following 200-residue polypeptide: ATP-dependent Clp protease proteolytic subunit 2 (200 aa).

Catalysis depends on Ser96, which acts as the Nucleophile. Residue His121 is part of the active site.

Belongs to the peptidase S14 family. Fourteen ClpP subunits assemble into 2 heptameric rings which stack back to back to give a disk-like structure with a central cavity, resembling the structure of eukaryotic proteasomes.

The protein localises to the cytoplasm. The catalysed reaction is Hydrolysis of proteins to small peptides in the presence of ATP and magnesium. alpha-casein is the usual test substrate. In the absence of ATP, only oligopeptides shorter than five residues are hydrolyzed (such as succinyl-Leu-Tyr-|-NHMec, and Leu-Tyr-Leu-|-Tyr-Trp, in which cleavage of the -Tyr-|-Leu- and -Tyr-|-Trp bonds also occurs).. Cleaves peptides in various proteins in a process that requires ATP hydrolysis. Has a chymotrypsin-like activity. Plays a major role in the degradation of misfolded proteins. This Synechococcus sp. (strain JA-2-3B'a(2-13)) (Cyanobacteria bacterium Yellowstone B-Prime) protein is ATP-dependent Clp protease proteolytic subunit 2.